We begin with the raw amino-acid sequence, 84 residues long: U8-theraphotoxin-Hhn1c 1 (84 aa).

The N-terminal stretch at 1 to 21 (MKVVLIVCLVWVMAMMELVSC) is a signal peptide. 5 cysteine pairs are disulfide-bonded: C23–C35, C29–C44, C34–C67, C54–C75, and C69–C81.

The protein belongs to the AVIT (prokineticin) family. In terms of tissue distribution, expressed by the venom gland.

The protein localises to the secreted. The protein is U8-theraphotoxin-Hhn1c 1 of Cyriopagopus hainanus (Chinese bird spider).